The following is a 186-amino-acid chain: Napin embryo-specific (186 aa).

The first 21 residues, 1-21, serve as a signal peptide directing secretion; it reads MANKLFLVSATLALFFLLTNA. 2 propeptides span residues 22–38 and 77–97; these read SVYRTVVEVDEDDATNP and PSWTLDGEFDFEDDVENQQQG.

This sequence belongs to the 2S seed storage albumins family. In terms of assembly, the mature protein consists of a small and a large chain linked by disulfide bonds. In terms of tissue distribution, cotyledons and the axis.

Functionally, the small, basic, water-soluble napins are one of the two major kinds of storage proteins synthesized in the seed during its maturation. This chain is Napin embryo-specific, found in Brassica napus (Rape).